Reading from the N-terminus, the 738-residue chain is NAD(P)H-quinone oxidoreductase subunit 5, chloroplastic (738 aa).

Helical transmembrane passes span 9–29 (WVIP…LFLI), 39–59 (IWAF…LHLS), 89–109 (VDPL…LVLI), 125–145 (FVYI…SNLI), 147–167 (IYFF…FWFT), 185–205 (GDFG…SLEF), 219–239 (NGIN…GAVA), 258–278 (TPIS…FLLA), 280–300 (LLPL…IGTI), 327–347 (LGYM…FHLI), 354–374 (ALLF…VGYS), 396–416 (TTFL…CFWS), 425–445 (WLYS…TAFY), 542–562 (LFPL…GIHF), 610–630 (SLAI…YSFF), 691–711 (GVID…GEEI), and 717–737 (GRIS…LFFI).

Belongs to the complex I subunit 5 family. As to quaternary structure, NDH is composed of at least 16 different subunits, 5 of which are encoded in the nucleus.

It is found in the plastid. Its subcellular location is the chloroplast thylakoid membrane. The catalysed reaction is a plastoquinone + NADH + (n+1) H(+)(in) = a plastoquinol + NAD(+) + n H(+)(out). The enzyme catalyses a plastoquinone + NADPH + (n+1) H(+)(in) = a plastoquinol + NADP(+) + n H(+)(out). In terms of biological role, NDH shuttles electrons from NAD(P)H:plastoquinone, via FMN and iron-sulfur (Fe-S) centers, to quinones in the photosynthetic chain and possibly in a chloroplast respiratory chain. The immediate electron acceptor for the enzyme in this species is believed to be plastoquinone. Couples the redox reaction to proton translocation, and thus conserves the redox energy in a proton gradient. In Zea mays (Maize), this protein is NAD(P)H-quinone oxidoreductase subunit 5, chloroplastic (ndhF).